Here is a 398-residue protein sequence, read N- to C-terminus: uncharacterized protein (398 aa).

The next 10 membrane-spanning stretches (helical) occupy residues 43–65, 89–108, 156–173, 180–198, 224–246, 259–281, 291–311, 316–338, 351–373, and 380–397; these read PILPMLITSVGGGSLSIGLVGGL, IFVVLGYLTSSMFKLLLGLS, TAGAILGSTLSLLFILYL, IILIAAVIGFLTLIPLYFV, LFILISAIFTLSNFSYMFYILRA, IIIPIALYILYNIFYATFSIPFG, SVLTIGYIVYGIVSLGFAYFI, LILLFALYGIAYALFAGNQKAYV, LGLFYTVVGLTSLPASLIAGYLW, and TFLYGSVLAIISGLLLLF.

This sequence belongs to the major facilitator superfamily.

The protein resides in the cell membrane. This is an uncharacterized protein from Methanocaldococcus jannaschii (strain ATCC 43067 / DSM 2661 / JAL-1 / JCM 10045 / NBRC 100440) (Methanococcus jannaschii).